Consider the following 200-residue polypeptide: Small ribosomal subunit protein uS4 (200 aa).

A disordered region spans residues 22-43; that stretch reads TGKELQKRPYPPGQHGPSQRRK. The S4 RNA-binding domain occupies 92–152; that stretch reads SRLDNLVYRL…EKSRNLQVIK (61 aa).

This sequence belongs to the universal ribosomal protein uS4 family. In terms of assembly, part of the 30S ribosomal subunit. Contacts protein S5. The interaction surface between S4 and S5 is involved in control of translational fidelity.

Functionally, one of the primary rRNA binding proteins, it binds directly to 16S rRNA where it nucleates assembly of the body of the 30S subunit. In terms of biological role, with S5 and S12 plays an important role in translational accuracy. In Geobacillus sp. (strain WCH70), this protein is Small ribosomal subunit protein uS4.